We begin with the raw amino-acid sequence, 461 residues long: Bifunctional protein GlmU (461 aa).

The interval M1–R229 is pyrophosphorylase. Residues L8 to G11, K22, Q72, and G77 to T78 contribute to the UDP-N-acetyl-alpha-D-glucosamine site. D102 is a Mg(2+) binding site. Residues G139, E154, N169, and N227 each contribute to the UDP-N-acetyl-alpha-D-glucosamine site. Position 227 (N227) interacts with Mg(2+). Residues I230–D250 form a linker region. Positions G251 to K461 are N-acetyltransferase. Residues R332 and K350 each contribute to the UDP-N-acetyl-alpha-D-glucosamine site. H362 serves as the catalytic Proton acceptor. Residues Y365 and N376 each contribute to the UDP-N-acetyl-alpha-D-glucosamine site. Acetyl-CoA-binding residues include A422 and R439.

It in the N-terminal section; belongs to the N-acetylglucosamine-1-phosphate uridyltransferase family. In the C-terminal section; belongs to the transferase hexapeptide repeat family. Homotrimer. The cofactor is Mg(2+).

The protein localises to the cytoplasm. The enzyme catalyses alpha-D-glucosamine 1-phosphate + acetyl-CoA = N-acetyl-alpha-D-glucosamine 1-phosphate + CoA + H(+). It catalyses the reaction N-acetyl-alpha-D-glucosamine 1-phosphate + UTP + H(+) = UDP-N-acetyl-alpha-D-glucosamine + diphosphate. It functions in the pathway nucleotide-sugar biosynthesis; UDP-N-acetyl-alpha-D-glucosamine biosynthesis; N-acetyl-alpha-D-glucosamine 1-phosphate from alpha-D-glucosamine 6-phosphate (route II): step 2/2. Its pathway is nucleotide-sugar biosynthesis; UDP-N-acetyl-alpha-D-glucosamine biosynthesis; UDP-N-acetyl-alpha-D-glucosamine from N-acetyl-alpha-D-glucosamine 1-phosphate: step 1/1. The protein operates within bacterial outer membrane biogenesis; LPS lipid A biosynthesis. Catalyzes the last two sequential reactions in the de novo biosynthetic pathway for UDP-N-acetylglucosamine (UDP-GlcNAc). The C-terminal domain catalyzes the transfer of acetyl group from acetyl coenzyme A to glucosamine-1-phosphate (GlcN-1-P) to produce N-acetylglucosamine-1-phosphate (GlcNAc-1-P), which is converted into UDP-GlcNAc by the transfer of uridine 5-monophosphate (from uridine 5-triphosphate), a reaction catalyzed by the N-terminal domain. The chain is Bifunctional protein GlmU from Lactobacillus delbrueckii subsp. bulgaricus (strain ATCC BAA-365 / Lb-18).